The sequence spans 234 residues: uncharacterized protein (234 aa).

Helical transmembrane passes span 20–40 (LILL…FKVI) and 176–196 (VMAF…LHFL).

Belongs to the CpsC/CapA family.

The protein resides in the cell membrane. This is an uncharacterized protein from Bacillus subtilis (strain 168).